We begin with the raw amino-acid sequence, 340 residues long: Glucokinase (340 aa).

17 to 22 (GDIGGT) is a binding site for ATP.

The protein belongs to the bacterial glucokinase family.

The protein resides in the cytoplasm. The catalysed reaction is D-glucose + ATP = D-glucose 6-phosphate + ADP + H(+). The polypeptide is Glucokinase (Agrobacterium fabrum (strain C58 / ATCC 33970) (Agrobacterium tumefaciens (strain C58))).